The chain runs to 116 residues: MKLEILESFENKYPNRDYTIEIVNPEFTSVCPITGLPDFGTITIRYVPNQRCVELKSLKYYFFEFRNAGIFYENITNKVLDDMVALLEPRSISVITEWKARGGITETVSVHYTSQS.

Cysteine 31 serves as the catalytic Thioimide intermediate. The active-site Proton donor is aspartate 38. Substrate contacts are provided by residues 53-55 and 72-73; these read VEL and YE.

This sequence belongs to the GTP cyclohydrolase I family. QueF type 1 subfamily.

It localises to the cytoplasm. The enzyme catalyses 7-aminomethyl-7-carbaguanine + 2 NADP(+) = 7-cyano-7-deazaguanine + 2 NADPH + 3 H(+). It functions in the pathway tRNA modification; tRNA-queuosine biosynthesis. Its function is as follows. Catalyzes the NADPH-dependent reduction of 7-cyano-7-deazaguanine (preQ0) to 7-aminomethyl-7-deazaguanine (preQ1). The chain is NADPH-dependent 7-cyano-7-deazaguanine reductase from Chlorobium chlorochromatii (strain CaD3).